An 870-amino-acid chain; its full sequence is Serine protease DegP homolog (870 aa).

An N-terminal signal peptide occupies residues 1–29 (MDIIFCTPTYCKIMLMIIMLISLRTRCDT). The segment at 128–151 (KNPLNDNFKNPKLRKHSPNNKKNK) is disordered. A compositionally biased stretch (basic residues) spans 138–151 (PKLRKHSPNNKKNK). Active-site charge relay system residues include His328, Asp359, and Ser437.

It belongs to the peptidase S1C family. Oligomer; may form trimers or hexamers. Forms a complex at least composed of DegP, ENO and HSP70.

The protein resides in the cytoplasm. It localises to the parasitophorous vacuole. It is found in the host cell membrane. Its subcellular location is the host cytoplasm. Serine protease which also acts as a protein chaperone. Plays a role in the parasite development in host erythrocytes possibly by protecting it against thermal and oxidative stresses. The sequence is that of Serine protease DegP homolog from Plasmodium falciparum (isolate 3D7).